The primary structure comprises 140 residues: Large ribosomal subunit protein bL21 (140 aa).

A disordered region spans residues 106–140 (SGVKPAVGARTKIEPAVKPAKAKKSEAEASAEDAN).

The protein belongs to the bacterial ribosomal protein bL21 family. As to quaternary structure, part of the 50S ribosomal subunit. Contacts protein L20.

Its function is as follows. This protein binds to 23S rRNA in the presence of protein L20. The protein is Large ribosomal subunit protein bL21 of Paracoccus denitrificans (strain Pd 1222).